A 165-amino-acid polypeptide reads, in one-letter code: MPAKSRSARLTHLDDAGLPTMVDVSGKAITARSATAESRVRFPAAVAAQLRANGLRSAKGGIVETAVIAGTMAVKRTHELIPFCHPLPIDACRFEIDWAGEQVLDIRCTVRCVHRTGVEMEALTGASVAALTVYDMCKALSHSMSIGPTRLVSKRGGKRDIGAAQ.

Residues 83 to 85 and 120 to 121 each bind substrate; these read FCH and ME. Asp-135 is a catalytic residue.

This sequence belongs to the MoaC family. In terms of assembly, homohexamer; trimer of dimers.

The catalysed reaction is (8S)-3',8-cyclo-7,8-dihydroguanosine 5'-triphosphate = cyclic pyranopterin phosphate + diphosphate. The protein operates within cofactor biosynthesis; molybdopterin biosynthesis. Functionally, catalyzes the conversion of (8S)-3',8-cyclo-7,8-dihydroguanosine 5'-triphosphate to cyclic pyranopterin monophosphate (cPMP). This chain is Cyclic pyranopterin monophosphate synthase, found in Xanthomonas oryzae pv. oryzae (strain MAFF 311018).